The following is a 122-amino-acid chain: Diacylglycerol kinase (122 aa).

ATP is bound by residues R10 and Y17. Substrate-binding positions include R10, 14–19 (AAGYSW), and 23–26 (RAAW). E29 is a binding site for ATP. Position 29 (E29) interacts with a divalent metal cation. Residues 31–35 (AFRQE), 48–51 (WLDV), R56, and E70 contribute to the substrate site. The chain crosses the membrane as a helical span at residues 35-55 (EGVAVLLAVVIACWLDVDAIT). Residues 57-77 (VLLISSVMLVMIVEILNSAIE) form a helical membrane-spanning segment. Residue E70 is the Proton acceptor of the active site. ATP-binding positions include E77, 86–88 (EYH), and 95–96 (KD). E77 is a binding site for a divalent metal cation. Residues 98 to 118 (GSAAVLIAIIVAVITWCILLW) traverse the membrane as a helical segment. Substrate is bound by residues S99 and 113–118 (WCILLW).

Belongs to the bacterial diacylglycerol kinase family. It depends on Mg(2+) as a cofactor.

The protein resides in the cell inner membrane. It catalyses the reaction a 1,2-diacyl-sn-glycerol + ATP = a 1,2-diacyl-sn-glycero-3-phosphate + ADP + H(+). Its function is as follows. Catalyzes the ATP-dependent phosphorylation of sn-l,2-diacylglycerol (DAG) to phosphatidic acid. Involved in the recycling of diacylglycerol produced as a by-product during membrane-derived oligosaccharide (MDO) biosynthesis. The chain is Diacylglycerol kinase (dgkA) from Shigella flexneri.